The primary structure comprises 360 residues: Peptide chain release factor 1 (360 aa).

An N5-methylglutamine modification is found at Gln235. A compositionally biased stretch (basic and acidic residues) spans 284–293; that stretch reads HKRQQEEAST. The interval 284-305 is disordered; the sequence is HKRQQEEASTRRNLLGSGDRSD.

It belongs to the prokaryotic/mitochondrial release factor family. In terms of processing, methylated by PrmC. Methylation increases the termination efficiency of RF1.

The protein resides in the cytoplasm. Peptide chain release factor 1 directs the termination of translation in response to the peptide chain termination codons UAG and UAA. This is Peptide chain release factor 1 from Pectobacterium atrosepticum (strain SCRI 1043 / ATCC BAA-672) (Erwinia carotovora subsp. atroseptica).